The sequence spans 370 residues: Cyclic dehypoxanthine futalosine synthase (370 aa).

Residues 50–295 form the Radical SAM core domain; sequence TTFVIGRNVN…QSSWVTMGPE (246 aa). [4Fe-4S] cluster is bound by residues C64, C68, and C71.

This sequence belongs to the radical SAM superfamily. MqnC family. The cofactor is [4Fe-4S] cluster.

The enzyme catalyses dehypoxanthine futalosine + S-adenosyl-L-methionine = cyclic dehypoxanthinylfutalosinate + 5'-deoxyadenosine + L-methionine + H(+). Its pathway is quinol/quinone metabolism; menaquinone biosynthesis. Functionally, radical SAM enzyme that catalyzes the cyclization of dehypoxanthine futalosine (DHFL) into cyclic dehypoxanthine futalosine (CDHFL), a step in the biosynthesis of menaquinone (MK, vitamin K2). The sequence is that of Cyclic dehypoxanthine futalosine synthase from Halalkalibacterium halodurans (strain ATCC BAA-125 / DSM 18197 / FERM 7344 / JCM 9153 / C-125) (Bacillus halodurans).